Consider the following 390-residue polypeptide: RNA binding protein fox-1 homolog 2 (390 aa).

Residues 1–127 (MQNEPLTPGY…STPKRLHVSN (127 aa)) are disordered. Composition is skewed to polar residues over residues 18–28 (SQGNQEPTTTP) and 65–95 (GEHN…SLTT). Phosphothreonine is present on His-67. Residues 97 to 117 (GGAQTDGQQSQTQSSENSESK) show a composition bias toward low complexity. Residues 121–197 (KRLHVSNIPF…RKIEVNNATA (77 aa)) enclose the RRM domain. Residues Gly-249, Gly-267, Phe-268, Ala-277, and Arg-281 each carry the omega-N-methylarginine modification. Arg-297 and Arg-329 each carry asymmetric dimethylarginine. An asymmetric dimethylarginine; alternate mark is found at Arg-381 and Arg-386. Residues Arg-381 and Arg-386 each carry the omega-N-methylarginine; alternate modification.

As to quaternary structure, interacts with ER-alpha N-terminal activation domain. Interacts with RBPMS; the interaction allows cooperative assembly of stable cell-specific alternative splicing regulatory complexes.

It localises to the nucleus. The protein localises to the cytoplasm. RNA-binding protein that regulates alternative splicing events by binding to 5'-UGCAUGU-3' elements. Prevents binding of U2AF2 to the 3'-splice site. Regulates alternative splicing of tissue-specific exons and of differentially spliced exons during erythropoiesis. RNA-binding protein that seems to act as a coregulatory factor of ER-alpha. Together with RNA binding proteins RBPMS and MBNL1/2, activates vascular smooth muscle cells alternative splicing events. In Homo sapiens (Human), this protein is RNA binding protein fox-1 homolog 2 (RBFOX2).